We begin with the raw amino-acid sequence, 709 residues long: Polyribonucleotide nucleotidyltransferase (709 aa).

Mg(2+) is bound by residues Asp-487 and Asp-493. The 60-residue stretch at 554-613 folds into the KH domain; it reads PRIHTMKISSDKIKDVIGKGGAVIRALCEETGTTIEIEDDGTIKIAATEGAAAKEAIRRI. The region spanning 623–691 is the S1 motif domain; it reads GKIYTGKVMR…RQGRIRLSIK (69 aa).

The protein belongs to the polyribonucleotide nucleotidyltransferase family. Component of the RNA degradosome, which is a multiprotein complex involved in RNA processing and mRNA degradation. Requires Mg(2+) as cofactor.

Its subcellular location is the cytoplasm. It carries out the reaction RNA(n+1) + phosphate = RNA(n) + a ribonucleoside 5'-diphosphate. Involved in mRNA degradation. Catalyzes the phosphorolysis of single-stranded polyribonucleotides processively in the 3'- to 5'-direction. In Aliivibrio fischeri (strain ATCC 700601 / ES114) (Vibrio fischeri), this protein is Polyribonucleotide nucleotidyltransferase.